The sequence spans 373 residues: Thyroid hormone receptor beta-A (373 aa).

Residues 1 to 18 (MPSSMSGYIPSYLDKDEL) form a modulating region. 2 NR C4-type zinc fingers span residues 19-39 (CVVCGDKATGYHYRCITCEGC) and 57-81 (CKYEGKCVIDKVTRNQCQECRFKKC). Residues 19–93 (CVVCGDKATG…VGMATDLVLD (75 aa)) constitute a DNA-binding region (nuclear receptor). Positions 129 to 373 (EEWELIQVVT…PPLFLEVFED (245 aa)) constitute an NR LBD domain.

The protein belongs to the nuclear hormone receptor family. NR1 subfamily.

Its subcellular location is the nucleus. Its function is as follows. High affinity receptor for triiodothyronine (T3). This Xenopus laevis (African clawed frog) protein is Thyroid hormone receptor beta-A (thrb-a).